Reading from the N-terminus, the 283-residue chain is uncharacterized protein (283 aa).

The next 5 membrane-spanning stretches (helical) occupy residues 8 to 28 (LILSIVGNILLGLIKIIIGYV), 38 to 58 (GIHSLSDVITSIIGIIGVKIA), 73 to 93 (FECLFSFFIGLALFFTAYEIG), 100 to 120 (IIYGEVIEVNAIMVGVAILSI), and 175 to 195 (AIAGIIVALMIAKVAFDICLT).

This sequence belongs to the cation diffusion facilitator (CDF) transporter (TC 2.A.4) family.

It is found in the cell membrane. This is an uncharacterized protein from Methanocaldococcus jannaschii (strain ATCC 43067 / DSM 2661 / JAL-1 / JCM 10045 / NBRC 100440) (Methanococcus jannaschii).